The following is a 326-amino-acid chain: Nitrogen metabolite regulation-like protein bik4 (326 aa).

NADP(+) contacts are provided by residues 13–18 (GATGEV) and 161–164 (FASN).

This sequence belongs to the NmrA-type oxidoreductase family.

Nitrogen metabolite regulation-like protein involved in the regulation of the gene cluster that mediates the biosynthesis of bikaverin, a red pigment also considered as a mycotoxin. This Gibberella fujikuroi (strain CBS 195.34 / IMI 58289 / NRRL A-6831) (Bakanae and foot rot disease fungus) protein is Nitrogen metabolite regulation-like protein bik4.